The chain runs to 2116 residues: MERLLDEVLAPGGPYNLTVGSWVRDHVRSIVEGAWEVRDVVSAAQKRAIVAVIPRPVFTQMQVSDHPALHAISRYTRRHWIEWGPKEALHVLIDPSPGLLREVARVERRWVALCLHRTARKLATALAETASEAWHADYVCALRGAPSGPFYVHPEDVPHGGRAVADRCLLYYTPMQMCELMRTIDATLLVAVDLWPVALAAHVGDDWDDLGIAWHLDHDGGCPADCRGAGAGPTPGYTRPCTTRIYQVLPDTAHPGRLYRCGPRLWTRDCAVAELSWEVAQHCGHQARVRAVRCTLPIRHVRSLQPSARVRLPDLVHLAEVGRWRWFSLPRPVFQRMLSYCKTLSPDAYYSERVFKFKNALSHSITLAGNVLQEGWKGTCAEEDALCAYVAFRAWQSNARLAGIMKSAKRCAADSLSVAGWLDTIWGAIKRFFGSVPLAERMEEWEQDAAVAAFDRGPLEDGGRHLDTVQPPKSPPRPEIAATWIVHAASADRHCACAPRCDVPRERPSAPAGPPDDEALIPPWLFAEHRALRCREWDFEVLRARADTAAAPAPLAPRPARYPTVLYRHPAHHGPWLTLDEPGEADAALVLCDPLGQPLRGPERHFAAGAHMCAQARGLQAFVRVVPPPERPWADGGARAWAKFFRGCAWAQRLLGEPAVMHLPYTDGDVPQLIALALRTLAQQGAALALSVRDLPGGAAFDANAVTAAVRAGPGQSAATSSPPGDPPPPRCARRSQRHSDARGTPPPAPARDPPPPAPSPPAPPRAGDPVPPTSAGPADRARDAELEVAYEPSGPPTSTKADPDSDIVESYARAAGPVHLRVRDIMDPPPGCKVVVNAANEGLLAGSGVCGAIFANATAALAADCRRLAPCPTGEAVATPGHGCGYTHIIHAVAPRRPRDPAALEEGEALLERAYRSIVALAAARRWARVACPLLGAGVYGWSAAESLRAALAATRTEPAERVSLHICHPDRATLTHASVLVGAGLAARRVSPPPTEPLASCPAGDPGRPAQRSASPPATPLGDATAPEPRGCQGCELCRYTRVTNDRAYVNLWLERDRGATSWAMRIPEVVVYGPEHLATHFPLNHYSVLKPAEVRPPRGMCGSDMWRCRGWQGVPQVRCTPSNAHAALCRTGVPPRVSTRGGELDPNTCWLRAAANVAQAARACGAYTSAGCPRCAYGRALSEARTHKDFAALSQRWSASHADASSDGTGDPLDPLMETVGCACSRVWVGSEHEAPPDHLLVSLHRAPNGPWGVVLEVRARPEGGNPTGHFVCAVGGGPRRVSDRPHLWLAVPLSRGGGTCAATDEGLAQAYYDDLEVRRLGDDAMARAALASVQRPRKGPYNIRVWNMAAGAGKTTRILAAFTREDLYVCPTNALLHEIQAKLRARDIEIKNAATYERALTKPLAAYRRIYIDEAFTLGGEYCAFVASQTTAEVICVGDRDQCGPHYANNCRTPVPDRWPTERSRHTWRFPDCWAARLRAGLDYDIEGERTGTFACNLWDGRQVDLHLAFSRETVRRLHEAGIRAYTVREAQGMSVGTACIHVGRDGTDVALALTRDLAIVSLTRASDALYLHELEDGSLRAAGLSAFLDAGALAELKEVPAGIDRVVAVEQAPPPLPPADGIPEAQDVPPFCPRTLEELVFGRAGHPHYADLNRVTEGEREVRYMRISRHLLNKNHTEMPGTERVLSAVCAVRRYRAGEDGSTLRTAVARQHPRPFRQIPPPRVTAGVAQEWRMTYLRERIDLTDVYTQMGVAARELTDRYARRYPEIFAGMCTAQSLSVPAFLKATLKCVDAALGPRDTEDCHAAQGKAGLEIRAWAKEWVQVMSPHFRAIQKIIMRALRPQFLVAAGHTEPEVDAWWQAHYTTNAIEVDFTEFDMNQTLATRDVELEISAALLGLPCAEDYRALRAGSYCTLRELGSTETGCERTSGEPATLLHNTTVAMCMAMRMVPKGVRWAGIFQGDDMVIFLPEGARSAALKWTPAEVGLFGFHIPVKHVSTPTPSFCGHVGTAAGLFHDVMHQAIKVLCRRFDPDVLEEQQVALLDRLRGVYAALPDTVAANAAYYDYSAERVLAIVRELTAYARGRGLDHPATIGALEEIQTPYARANLHDAD.

Residues 36 to 49 (EVRDVVSAAQKRAI) are required for efficient proteolysis and P150-P90 interaction. The region spanning 57–247 (VFTQMQVSDH…TRPCTTRIYQ (191 aa)) is the Alphavirus-like MT domain. Residues 712–723 (AGPGQSAATSSP) show a composition bias toward low complexity. Positions 712 to 782 (AGPGQSAATS…PTSAGPADRA (71 aa)) are disordered. Short sequence motifs (pxxPxR; class II SH3-binding) lie at residues 727 to 732 (PPPPRC), 747 to 752 (PPAPAR), and 761 to 766 (PPAPPR). Residues 745-775 (TPPPAPARDPPPPAPSPPAPPRAGDPVPPTS) show a composition bias toward pro residues. A Macro domain is found at 806–985 (SDIVESYARA…LTHASVLVGA (180 aa)). The disordered stretch occupies residues 992–1031 (VSPPPTEPLASCPAGDPGRPAQRSASPPATPLGDATAPEP). The region spanning 1000-1301 (LASCPAGDPG…WLAVPLSRGG (302 aa)) is the Peptidase C27 domain. Cys-1152 serves as the catalytic For cysteine protease activity. The interaction with host CALM1 stretch occupies residues 1152–1183 (CWLRAAANVAQAARACGAYTSAGCPRCAYGRA). Residues Cys-1175, Cys-1178, Cys-1227, and His-1273 each contribute to the Zn(2+) site. An EF-hand-like region spans residues 1193 to 1228 (FAALSQRWSASHADASSDGTGDPLDPLMETVGCACS). His-1273 acts as the For cysteine protease activity in catalysis. The 149-residue stretch at 1320-1468 (EVRRLGDDAM…VPDRWPTERS (149 aa)) folds into the (+)RNA virus helicase ATP-binding domain. 1352-1359 (MAAGAGKT) is a binding site for a ribonucleoside 5'-triphosphate. Residues 1469–1609 (RHTWRFPDCW…ELKEVPAGID (141 aa)) form the (+)RNA virus helicase C-terminal domain. The involved in P150-P90 interaction stretch occupies residues 1700–1900 (YRAGEDGSTL…VELEISAALL (201 aa)). Positions 1870–1981 (TNAIEVDFTE…FLPEGARSAA (112 aa)) constitute a RdRp catalytic domain. Residues 1902–1906 (LPCAE) carry the Human RB1 binding motif.

Interacts with RNA-directed RNA polymerase p90. Interacts with host CALM1; this interaction is necessary for the protease activity and viral infectivity. Interacts with host C1QBP. Interacts with the capsid protein. As to quaternary structure, interacts with human RB1/retinoblastoma protein. Interacts with protease/methyltransferase p150. Zn(2+) is required as a cofactor. Post-translationally, specific enzymatic cleavage by its own cysteine protease yield mature proteins p150 and p90.

It localises to the host membrane. It is found in the host cytoplasm. The protein resides in the host perinuclear region. It carries out the reaction RNA(n) + a ribonucleoside 5'-triphosphate = RNA(n+1) + diphosphate. The catalysed reaction is a ribonucleoside 5'-triphosphate + H2O = a ribonucleoside 5'-diphosphate + phosphate + H(+). The enzyme catalyses ATP + H2O = ADP + phosphate + H(+). Functionally, probable principal replicase for the negative-strand DNA, which replicates the 40S (+) genomic RNA into (-) antigenomic RNA. It cannot replicate the (-) into (+) until cleaved into p150 and p90 mature proteins. Its function is as follows. Protease that cleaves the precursor polyprotein into two mature products. Together with RNA-directed RNA polymerase p90, replicates the 40S genomic and antigenomic RNA by recognizing replications specific signals. The heterodimer P150/p90 is probably the principal replicase for positive-strand genomic RNA and the 24S subgenomic RNA, which codes for structural proteins. Responsible for the mRNA-capping of the viral mRNAs. This function is necessary since all viral RNAs are synthesized in the cytoplasm, and host capping enzymes are restricted to the nucleus. Forms fibers late in the infection that may be involved in cell-to-cell spread of the virus RNA in the absence of virus particle formation. In terms of biological role, together with protease/methyltransferase p150, replicates the 40S genomic and antigenomic RNA by recognizing replications specific signals. The heterodimer P150/p90 is probably the principal replicase for positive-strand genomic RNA and the 24S subgenomic RNA, which codes for structural proteins. A helicase activity is probably also present. The polypeptide is Non-structural polyprotein p200 (Homo sapiens (Human)).